Reading from the N-terminus, the 784-residue chain is Copal-8-ol diphosphate hydratase TPSSA9, chloroplastic (784 aa).

Arginine 240 contributes to the substrate binding site. Mg(2+) is bound by residues aspartate 372 and aspartate 374. Residues 372 to 375 (DIDD) carry the DXDD motif motif. Substrate is bound at residue arginine 459.

This sequence belongs to the terpene synthase family.

The protein resides in the plastid. Its subcellular location is the chloroplast. The catalysed reaction is (2E,6E,10E)-geranylgeranyl diphosphate + H2O = 8-hydroxycopalyl diphosphate. Its pathway is secondary metabolite biosynthesis; terpenoid biosynthesis. In terms of biological role, involved in the biosynthesis of labdane-type diterpenoid including sclareol, a diterpene-diol that is used as fragrance and flavoring, and has anticancer effects (able to kill leukemic and colon cancer cells by apoptosis). Sclareol can also be used as synthesis precursor of ambergris substitution fragance products such as ambrox. Terpene synthase that produces 8-hydroxycopalyl diphosphate from geranylgeranyl diphosphate (GGPP). The chain is Copal-8-ol diphosphate hydratase TPSSA9, chloroplastic from Salvia sclarea (Clary sage).